The chain runs to 187 residues: V-type ATP synthase subunit E (187 aa).

Belongs to the V-ATPase E subunit family.

Produces ATP from ADP in the presence of a proton gradient across the membrane. The chain is V-type ATP synthase subunit E from Geotalea uraniireducens (strain Rf4) (Geobacter uraniireducens).